The sequence spans 96 residues: UPF0235 protein Sputcn32_2690 (96 aa).

It belongs to the UPF0235 family.

The protein is UPF0235 protein Sputcn32_2690 of Shewanella putrefaciens (strain CN-32 / ATCC BAA-453).